A 90-amino-acid chain; its full sequence is Probable Fe(2+)-trafficking protein (90 aa).

The protein belongs to the Fe(2+)-trafficking protein family.

Functionally, could be a mediator in iron transactions between iron acquisition and iron-requiring processes, such as synthesis and/or repair of Fe-S clusters in biosynthetic enzymes. This is Probable Fe(2+)-trafficking protein from Aliivibrio salmonicida (strain LFI1238) (Vibrio salmonicida (strain LFI1238)).